The chain runs to 200 residues: Protein GrpE (200 aa).

Residues 1–27 (MTKQEKAENQEKPTEETVEETPKKETP) are compositionally biased toward basic and acidic residues. A disordered region spans residues 1-50 (MTKQEKAENQEKPTEETVEETPKKETPFEPVMEADEVEETTEAQAPVEEA). Residues 32-41 (MEADEVEETT) show a composition bias toward acidic residues.

It belongs to the GrpE family. In terms of assembly, homodimer.

It localises to the cytoplasm. Functionally, participates actively in the response to hyperosmotic and heat shock by preventing the aggregation of stress-denatured proteins, in association with DnaK and GrpE. It is the nucleotide exchange factor for DnaK and may function as a thermosensor. Unfolded proteins bind initially to DnaJ; upon interaction with the DnaJ-bound protein, DnaK hydrolyzes its bound ATP, resulting in the formation of a stable complex. GrpE releases ADP from DnaK; ATP binding to DnaK triggers the release of the substrate protein, thus completing the reaction cycle. Several rounds of ATP-dependent interactions between DnaJ, DnaK and GrpE are required for fully efficient folding. The polypeptide is Protein GrpE (Latilactobacillus sakei subsp. sakei (strain 23K) (Lactobacillus sakei subsp. sakei)).